We begin with the raw amino-acid sequence, 61 residues long: Temporin-CG3 (61 aa).

Residues 1 to 22 form the signal peptide; that stretch reads MFTMKKPLLLLFFLATINLSLC. The propeptide at 23–44 is removed in mature form; it reads EQERNAEEERRDEPDERNAEVE.

Belongs to the frog skin active peptide (FSAP) family. Temporin subfamily. In terms of tissue distribution, expressed by the skin glands.

The protein resides in the secreted. In terms of biological role, antimicrobial peptide active against a variety of Gram-positive bacterial strains but not against Gram-negative bacteria. Has weak antifungal activity against a slime mold isolate. Has weak hemolytic activity against human erythrocytes. The chain is Temporin-CG3 from Amolops chunganensis (Chungan torrent frog).